The primary structure comprises 147 residues: Cytochrome c-type biogenesis protein CcmE (147 aa).

Residues 1 to 7 (MTRKQKR) are Cytoplasmic-facing. A helical; Signal-anchor for type II membrane protein transmembrane segment spans residues 8–28 (LSVIVGGLAFLGAATGLTFYA). The Periplasmic portion of the chain corresponds to 29–147 (LGQKASYFYM…KGVWQESKSE (119 aa)). Heme-binding residues include His122 and Tyr126.

It belongs to the CcmE/CycJ family.

It is found in the cell inner membrane. In terms of biological role, heme chaperone required for the biogenesis of c-type cytochromes. Transiently binds heme delivered by CcmC and transfers the heme to apo-cytochromes in a process facilitated by CcmF and CcmH. This chain is Cytochrome c-type biogenesis protein CcmE, found in Mesorhizobium japonicum (strain LMG 29417 / CECT 9101 / MAFF 303099) (Mesorhizobium loti (strain MAFF 303099)).